The primary structure comprises 342 residues: Glycerol-1-phosphate dehydrogenase [NAD(P)+] (342 aa).

Residues 84–88 (GRPID) and 106–109 (TSAS) each bind NAD(+). A substrate-binding site is contributed by D111. S115 lines the NAD(+) pocket. D160 lines the substrate pocket. Positions 160 and 241 each coordinate Zn(2+). A substrate-binding site is contributed by H245. Zn(2+) is bound at residue H260.

Belongs to the glycerol-1-phosphate dehydrogenase family. Homodimer. The cofactor is Zn(2+).

The protein localises to the cytoplasm. The enzyme catalyses sn-glycerol 1-phosphate + NAD(+) = dihydroxyacetone phosphate + NADH + H(+). It catalyses the reaction sn-glycerol 1-phosphate + NADP(+) = dihydroxyacetone phosphate + NADPH + H(+). Its pathway is membrane lipid metabolism; glycerophospholipid metabolism. Functionally, catalyzes the NAD(P)H-dependent reduction of dihydroxyacetonephosphate (DHAP or glycerone phosphate) to glycerol 1-phosphate (G1P). The G1P thus generated is used as the glycerophosphate backbone of phospholipids in the cellular membranes of Archaea. The protein is Glycerol-1-phosphate dehydrogenase [NAD(P)+] of Pyrobaculum arsenaticum (strain DSM 13514 / JCM 11321 / PZ6).